Reading from the N-terminus, the 184-residue chain is Shikimate kinase (184 aa).

Position 17–22 (17–22 (GAGKTT)) interacts with ATP. Threonine 21 provides a ligand contact to Mg(2+). Substrate contacts are provided by aspartate 39, arginine 63, and glycine 85. Arginine 123 serves as a coordination point for ATP. Residue arginine 142 coordinates substrate.

The protein belongs to the shikimate kinase family. Monomer. Mg(2+) serves as cofactor.

It is found in the cytoplasm. The catalysed reaction is shikimate + ATP = 3-phosphoshikimate + ADP + H(+). Its pathway is metabolic intermediate biosynthesis; chorismate biosynthesis; chorismate from D-erythrose 4-phosphate and phosphoenolpyruvate: step 5/7. Catalyzes the specific phosphorylation of the 3-hydroxyl group of shikimic acid using ATP as a cosubstrate. This Burkholderia lata (strain ATCC 17760 / DSM 23089 / LMG 22485 / NCIMB 9086 / R18194 / 383) protein is Shikimate kinase.